The primary structure comprises 217 residues: KS1 protein (217 aa).

The first 16 residues, 1 to 16 (MKLIIVLVMMLVCVYS), serve as a signal peptide directing secretion. Basic and acidic residues predominate over residues 24-47 (PKNHEVPAKKQFAETKVEKKKRSD). 2 disordered regions span residues 24–58 (PKNHEVPAKKQFAETKVEKKKRSDDGDEEICDDDD) and 72–205 (EDDD…LKIK). Tandem repeats lie at residues 32–81 (KKQF…VDGG) and 98–147 (KKKK…YDED). Residues 32–147 (KKQFAETKVE…EEDDDCYDED (116 aa)) are 2 X 50 AA approximate repeats. 2 stretches are compositionally biased toward acidic residues: residues 48-58 (DGDEEICDDDD) and 72-94 (EDDDDCVDGGETEECDEDDDDCQ). Residues 98-110 (KKKKRETKPKLKK) are compositionally biased toward basic residues. A compositionally biased stretch (acidic residues) spans 114-145 (DEEEEECEEDDEDCEVEVDIEECDEEDDDCYD). Basic residues predominate over residues 149-188 (KKKKENKLKKESKKKNSKKTVPKNAKKSSKRSTSTKKTSQ).

In terms of tissue distribution, expressed in tentacle-specific epithelial cells (battery cells) as well as in a small fraction of ectodermal epithelial cells in the gastric region subjacent to the tentacles (the tentacle formation region). The later cells are committed to become battery cells.

Functionally, responds to early signals of head formation in hydra. In Hydra vulgaris (Hydra), this protein is KS1 protein (KS1).